The chain runs to 269 residues: MSGNSEVEYLKSLVSQLQDKIHHLEKSTSTSVSNTISSVTSALSPSSSIKPPRMVLIGPPGAGKGTQAPNISSKYCICHLATGDMLREQVARQTELGKAAKQIMDQGGLVSDEIMVGMIKQELEKNAECKNGFILDGFPRTVPQASKLDAMLAERKQAIDHAIELKIPDVLLISRITGRLVHPASGRSYHKEFNPPKKPMTDDITGEPLIQRSDDNVGTLRKRLDTYHAQTGPVVDYYKGTGVWTPVDAAQSPKLVWASISSILESKKN.

61 to 66 (GAGKGT) contacts ATP. The NMP stretch occupies residues 81–110 (ATGDMLREQVARQTELGKAAKQIMDQGGLV). AMP contacts are provided by residues threonine 82, arginine 87, 108-110 (GLV), 137-140 (GFPR), and glutamine 144. The segment at 178-215 (GRLVHPASGRSYHKEFNPPKKPMTDDITGEPLIQRSDD) is LID. Residues arginine 179 and 188–189 (SY) each bind ATP. 2 residues coordinate AMP: arginine 212 and arginine 223. Glutamine 251 contributes to the ATP binding site.

This sequence belongs to the adenylate kinase family. AK2 subfamily. As to quaternary structure, monomer.

The protein resides in the cytoplasm. The protein localises to the cytosol. It is found in the mitochondrion intermembrane space. It carries out the reaction AMP + ATP = 2 ADP. Its function is as follows. Catalyzes the reversible transfer of the terminal phosphate group between ATP and AMP. Plays an important role in cellular energy homeostasis and in adenine nucleotide metabolism. Adenylate kinase activity is critical for regulation of the phosphate utilization and the AMP de novo biosynthesis pathways. This chain is Adenylate kinase, found in Cryptococcus neoformans var. neoformans serotype D (strain B-3501A) (Filobasidiella neoformans).